We begin with the raw amino-acid sequence, 426 residues long: Serine--tRNA ligase (426 aa).

235–237 (TAE) contacts L-serine. ATP-binding positions include 266-268 (RRE) and V282. E289 provides a ligand contact to L-serine. Residue 353 to 356 (EASS) participates in ATP binding. S389 lines the L-serine pocket.

This sequence belongs to the class-II aminoacyl-tRNA synthetase family. Type-1 seryl-tRNA synthetase subfamily. As to quaternary structure, homodimer. The tRNA molecule binds across the dimer.

The protein resides in the cytoplasm. The catalysed reaction is tRNA(Ser) + L-serine + ATP = L-seryl-tRNA(Ser) + AMP + diphosphate + H(+). It carries out the reaction tRNA(Sec) + L-serine + ATP = L-seryl-tRNA(Sec) + AMP + diphosphate + H(+). Its pathway is aminoacyl-tRNA biosynthesis; selenocysteinyl-tRNA(Sec) biosynthesis; L-seryl-tRNA(Sec) from L-serine and tRNA(Sec): step 1/1. Functionally, catalyzes the attachment of serine to tRNA(Ser). Is also able to aminoacylate tRNA(Sec) with serine, to form the misacylated tRNA L-seryl-tRNA(Sec), which will be further converted into selenocysteinyl-tRNA(Sec). This is Serine--tRNA ligase from Chlorobium chlorochromatii (strain CaD3).